Reading from the N-terminus, the 194-residue chain is Phosphoheptose isomerase (194 aa).

An SIS domain is found at 34–188 (LANIFTKGKK…IEGVERIMFP (155 aa)). A substrate-binding site is contributed by 49-51 (NGG). Positions 58 and 62 each coordinate Zn(2+). Residues Glu-62, 90 to 91 (ND), 116 to 118 (STS), Ser-121, and Gln-168 each bind substrate. Residues Gln-168 and His-176 each contribute to the Zn(2+) site.

The protein belongs to the SIS family. GmhA subfamily. Requires Zn(2+) as cofactor.

The protein localises to the cytoplasm. The catalysed reaction is 2 D-sedoheptulose 7-phosphate = D-glycero-alpha-D-manno-heptose 7-phosphate + D-glycero-beta-D-manno-heptose 7-phosphate. Its pathway is carbohydrate biosynthesis; D-glycero-D-manno-heptose 7-phosphate biosynthesis; D-glycero-alpha-D-manno-heptose 7-phosphate and D-glycero-beta-D-manno-heptose 7-phosphate from sedoheptulose 7-phosphate: step 1/1. Its function is as follows. Catalyzes the isomerization of sedoheptulose 7-phosphate in D-glycero-D-manno-heptose 7-phosphate. This chain is Phosphoheptose isomerase, found in Fusobacterium nucleatum subsp. nucleatum (strain ATCC 25586 / DSM 15643 / BCRC 10681 / CIP 101130 / JCM 8532 / KCTC 2640 / LMG 13131 / VPI 4355).